The sequence spans 167 residues: Small ribosomal subunit protein uS5 (167 aa).

The 64-residue stretch at 12 to 75 (LQEKLVQVNR…DAARKNMITV (64 aa)) folds into the S5 DRBM domain.

Belongs to the universal ribosomal protein uS5 family. In terms of assembly, part of the 30S ribosomal subunit. Contacts proteins S4 and S8.

Its function is as follows. With S4 and S12 plays an important role in translational accuracy. Located at the back of the 30S subunit body where it stabilizes the conformation of the head with respect to the body. This is Small ribosomal subunit protein uS5 from Hahella chejuensis (strain KCTC 2396).